The sequence spans 441 residues: MPRVEVGLVIHSRMHARAPVDVWRSVRSLPDFWRLLQVRVASQFGDGLFQAGLAGALLFNPDRAADPMAIAGAFAVLFLPYSLLGPFAGALMDRWDRRWVLVGANTGRLALIAGVGTILAVGAGDVPLLVGALVANGLARFVASGLSAALPHVVPREQVVTMNSVAIASGAVSAFLGANFMLLPRWLLGSGDEGASAIVFLVAIPVSIALLWSLRFGPRVLGPDDTERAIHGSAVYAVVTGWLHGARTVVQLPTVAAGLSGLAAHRMVVGINSLLILLLVRHVTARAVGGLGTALLFFAATGLGAFLANVLTPTAIRRWGRYATANGALAAAATIQVAAAGLLVPVMVVCGFLLGVAGQVVKLCADSAMQMDVDDALRGHVFAVQDALFWVSYILSITVAAALIPEHGHAPVFVLFGSAIYLAGLVVHTIVGRRGQPVIGR.

Transmembrane regions (helical) follow at residues 68–88, 110–130, 131–151, 164–184, 194–214, 229–246, 260–280, 287–307, 337–357, 384–404, and 412–432; these read MAIA…GPFA, ALIA…PLLV, GALV…AALP, SVAI…MLLP, GASA…LWSL, AIHG…LHGA, SGLA…LLLV, AVGG…GAFL, VAAA…LGVA, VQDA…AALI, and VFVL…TIVG.

The protein belongs to the major facilitator superfamily.

Its subcellular location is the cell membrane. This is an uncharacterized protein from Mycobacterium tuberculosis (strain ATCC 25618 / H37Rv).